The following is a 361-amino-acid chain: PTI1-like tyrosine-protein kinase At3g15890 (361 aa).

The Protein kinase domain maps to 39–328; sequence FNYDNKLGEG…ISELEANPLF (290 aa). Residues 45–53 and Lys67 contribute to the ATP site; that span reads LGEGRFGSV. Residue Asp165 is the Proton acceptor of the active site. Disordered regions lie at residues 195–219 and 323–361; these read TGDG…SGKE and EANP…QQQE. The segment covering 351–361 has biased composition (basic and acidic residues); it reads LEDKDHQQQQE.

This sequence belongs to the protein kinase superfamily. Tyr protein kinase family.

The catalysed reaction is L-tyrosyl-[protein] + ATP = O-phospho-L-tyrosyl-[protein] + ADP + H(+). This Arabidopsis thaliana (Mouse-ear cress) protein is PTI1-like tyrosine-protein kinase At3g15890.